Here is a 156-residue protein sequence, read N- to C-terminus: Small ribosomal subunit protein uS7 (156 aa).

This sequence belongs to the universal ribosomal protein uS7 family. Part of the 30S ribosomal subunit. Contacts proteins S9 and S11.

Functionally, one of the primary rRNA binding proteins, it binds directly to 16S rRNA where it nucleates assembly of the head domain of the 30S subunit. Is located at the subunit interface close to the decoding center, probably blocks exit of the E-site tRNA. In Rhizobium johnstonii (strain DSM 114642 / LMG 32736 / 3841) (Rhizobium leguminosarum bv. viciae), this protein is Small ribosomal subunit protein uS7.